The following is a 1457-amino-acid chain: ABC transporter G family member 36 (1457 aa).

The disordered stretch occupies residues 14–43 (RLGGSMRGDSGSMWRRGDDVFSRSSREEDD). Basic and acidic residues predominate over residues 28 to 39 (RRGDDVFSRSSR). The ABC transporter 1 domain maps to 164–437 (GNALGILPNR…FESTGFKCPD (274 aa)). 197–204 (GPPGSGKT) is a binding site for ATP. The ABC transmembrane type-2 1 domain occupies 515 to 728 (ELLKANIDRE…AQNAISVNEL (214 aa)). Helical transmembrane passes span 533-553 (FVYM…MTLF), 565-585 (SGGI…FNGF), 621-641 (IPIT…VIGF), 653-673 (LLML…GGAA), 677-697 (IVAN…GGFI), 706-726 (WWIW…ISVN), and 765-785 (IGFG…TLAL). A disordered region spans residues 821-841 (SSGSTRRPMGNGTENDSTIVD). Residues 860–1112 (LSFDNVRYSV…ELIKYFESIP (253 aa)) enclose the ABC transporter 2 domain. 905–912 (GVSGAGKT) is an ATP binding site. The ABC transmembrane type-2 2 domain maps to 1185-1399 (TQCMACLWKQ…TLYGLVVSQF (215 aa)). A run of 7 helical transmembrane segments spans residues 1209–1229 (FFFT…LGGK), 1244–1264 (YAAV…VVAV), 1292–1312 (IPYT…MIGF), 1319–1339 (FFWY…YGMM), 1349–1369 (IASI…GFVI), 1380–1400 (WYCW…SQFG), and 1429–1449 (WVAT…GFAI).

It belongs to the ABC transporter superfamily. ABCG family. PDR (TC 3.A.1.205) subfamily.

The protein localises to the membrane. May be a general defense protein. In Oryza sativa subsp. indica (Rice), this protein is ABC transporter G family member 36.